The sequence spans 434 residues: Tol-Pal system protein TolB (434 aa).

The N-terminal stretch at 1–28 (MMNTRVWCKIIGMLALLVWLVSSPSVFA) is a signal peptide.

This sequence belongs to the TolB family. As to quaternary structure, the Tol-Pal system is composed of five core proteins: the inner membrane proteins TolA, TolQ and TolR, the periplasmic protein TolB and the outer membrane protein Pal. They form a network linking the inner and outer membranes and the peptidoglycan layer.

It is found in the periplasm. Functionally, part of the Tol-Pal system, which plays a role in outer membrane invagination during cell division and is important for maintaining outer membrane integrity. This is Tol-Pal system protein TolB from Nitrosococcus oceani (strain ATCC 19707 / BCRC 17464 / JCM 30415 / NCIMB 11848 / C-107).